The sequence spans 95 residues: Small ribosomal subunit protein bS6 (95 aa).

It belongs to the bacterial ribosomal protein bS6 family.

In terms of biological role, binds together with bS18 to 16S ribosomal RNA. The sequence is that of Small ribosomal subunit protein bS6 from Streptococcus agalactiae serotype Ia (strain ATCC 27591 / A909 / CDC SS700).